The primary structure comprises 204 residues: Prephenate decarboxylase (204 aa).

This sequence belongs to the prephenate decarboxylase family.

The protein localises to the cytoplasm. The catalysed reaction is prephenate + H(+) = 3-[(4R)-4-hydroxycyclohexa-1,5-dien-1-yl]-2-oxopropanoate + CO2. The protein operates within antibiotic biosynthesis; bacilysin biosynthesis. In terms of biological role, part of the bacABCDEF operon responsible for the biosynthesis of the nonribosomally synthesized dipeptide antibiotic bacilysin, composed of L-alanine and L-anticapsin. Bacilysin is an irreversible inactivator of the glutaminase domain of glucosamine synthetase. BacA is an unusual prephenate decarboxylase that avoids the typical aromatization of the cyclohexadienol ring of prephenate. BacA catalyzes the protonation of prephenate (1-carboxy-4-hydroxy-alpha-oxo-2,5-cyclohexadiene-1-propanoic acid) at C6 position, followed by a decarboxylation to produce the endocyclic-delta(4),delta(8)-7R-dihydro-hydroxyphenylpyruvate (en-H2HPP). En-H2HPP is able to undergo a slow nonenzymatic isomerization to produce the exocyclic-delta(3),delta(5)-dihydro-hydroxyphenylpyruvate (ex-H2HPP). BacA isomerizes only the pro-R double bond in prephenate. This Bacillus subtilis protein is Prephenate decarboxylase.